The following is a 194-amino-acid chain: Der GTPase-activating protein YihI (194 aa).

The interval 1-81 is disordered; sequence MSRSKKTRRI…AKVKKDPRVG (81 aa). Composition is skewed to basic and acidic residues over residues 9 to 23 and 36 to 47; these read RISD…DKKP and TRYELDVQAREE. Positions 59–70 are enriched in polar residues; sequence GSRNVITEQKTA.

The protein belongs to the YihI family. Interacts with Der.

Its function is as follows. A GTPase-activating protein (GAP) that modifies Der/EngA GTPase function. May play a role in ribosome biogenesis. In Haemophilus ducreyi (strain 35000HP / ATCC 700724), this protein is Der GTPase-activating protein YihI.